The primary structure comprises 878 residues: Pyruvate, phosphate dikinase (878 aa).

The interval 1–347 (MKKLIYYFGS…LYILQTRTAK (347 aa)) is N-terminal. Arg96 contributes to the ATP binding site. The linker 1 stretch occupies residues 348-404 (RTAIAAINIAVQMVEEKLISKEQALMRIDPESLNQLLHTRIDYSKGLTSIAEGLPAS). The segment at 405-502 (PGAATGIAVF…VIKQGDIITI (98 aa)) is central. Thr457 is subject to Phosphothreonine; by PDRP1. Catalysis depends on His459, which acts as the Tele-phosphohistidine intermediate. Residues 503–537 (DGGSGKIFLGEMPLIQPTFSEESKLILDWADEISS) are linker 2. Residues 538 to 878 (LKVRANAETV…AAAQAKIKHG (341 aa)) are C-terminal. Substrate-binding residues include Arg565, Arg621, Glu749, Gly770, Thr771, Asn772, and Asp773. Glu749 contributes to the Mg(2+) binding site. Asp773 contacts Mg(2+). The active-site Proton donor is Cys835.

The protein belongs to the PEP-utilizing enzyme family. As to quaternary structure, homodimer. The cofactor is Mg(2+). Phosphorylation of Thr-457 in the dark inactivates the enzyme. Dephosphorylation upon light stimulation reactivates the enzyme.

The enzyme catalyses pyruvate + phosphate + ATP = phosphoenolpyruvate + AMP + diphosphate + H(+). With respect to regulation, activated by light-induced dephosphorylation. Inhibited by dark-induced phosphorylation. Both reactions are catalyzed by PDRP1. Its function is as follows. Catalyzes the reversible phosphorylation of pyruvate and phosphate. The chain is Pyruvate, phosphate dikinase (ppdK) from Rickettsia conorii (strain ATCC VR-613 / Malish 7).